The sequence spans 154 residues: Superoxide dismutase [Cu-Zn] (154 aa).

Cu cation-binding residues include H47 and H64. The cysteines at positions 58 and 147 are disulfide-linked. Zn(2+) is bound by residues H64, H72, H81, and D84. Residue H121 participates in Cu cation binding. R144 contacts substrate.

The protein belongs to the Cu-Zn superoxide dismutase family. Homodimer. Cu cation is required as a cofactor. It depends on Zn(2+) as a cofactor.

It is found in the cytoplasm. It catalyses the reaction 2 superoxide + 2 H(+) = H2O2 + O2. Destroys radicals which are normally produced within the cells and which are toxic to biological systems. The polypeptide is Superoxide dismutase [Cu-Zn] (SOD1) (Pleurocordyceps sinensis (Polycephalomyces sinensis)).